The following is a 145-amino-acid chain: Immune protein Tsi4 (145 aa).

Transmembrane regions (helical) follow at residues 9 to 29 (IGGL…LLAG) and 109 to 129 (ALWG…IVGF).

It is found in the membrane. Its function is as follows. Immunity protein that plays a role in preventing early activation of toxin Tse4. The protein is Immune protein Tsi4 of Pseudomonas aeruginosa (strain ATCC 15692 / DSM 22644 / CIP 104116 / JCM 14847 / LMG 12228 / 1C / PRS 101 / PAO1).